The primary structure comprises 430 residues: Signal recognition particle receptor FtsY (430 aa).

Residues Asp-75–His-95 are disordered. GTP contacts are provided by residues Gly-238–Thr-245, Asp-320–Arg-324, and Thr-382–Asp-385.

This sequence belongs to the GTP-binding SRP family. FtsY subfamily. Part of the signal recognition particle protein translocation system, which is composed of SRP and FtsY.

It is found in the cell membrane. It localises to the cytoplasm. The enzyme catalyses GTP + H2O = GDP + phosphate + H(+). Involved in targeting and insertion of nascent membrane proteins into the cytoplasmic membrane. Acts as a receptor for the complex formed by the signal recognition particle (SRP) and the ribosome-nascent chain (RNC). The chain is Signal recognition particle receptor FtsY from Mycobacterium leprae (strain TN).